Reading from the N-terminus, the 80-residue chain is Biotin synthase auxiliary protein (80 aa).

Belongs to the BsaP family. It depends on iron-sulfur cluster as a cofactor.

Functionally, required for the activity of the biotin synthase BioB. This is Biotin synthase auxiliary protein from Mycobacterium leprae (strain TN).